A 616-amino-acid polypeptide reads, in one-letter code: E3 ubiquitin-protein ligase DTX4 (616 aa).

WWE domains follow at residues 1–78 and 79–155; these read MLLA…PVRR and NYYD…RVRR. 2 disordered regions span residues 223–254 and 355–387; these read VGKL…PSQV and PPPV…GKTP. The segment covering 375-384 has biased composition (basic residues); it reads KTTKKQAKKG. The segment at 406 to 465 adopts an RING-type; atypical zinc-finger fold; the sequence is CTICMERLTAPSGYKGPQPTVKPDLVGKLSRCGHIYHIYCLVAMYNNGNKDGSLQCPTCK.

Belongs to the Deltex family. As to quaternary structure, interacts with NLRP4. In terms of tissue distribution, expressed in brain, testis, embryonic fibroblasts and thymocytes.

It is found in the cytoplasm. The enzyme catalyses S-ubiquitinyl-[E2 ubiquitin-conjugating enzyme]-L-cysteine + [acceptor protein]-L-lysine = [E2 ubiquitin-conjugating enzyme]-L-cysteine + N(6)-ubiquitinyl-[acceptor protein]-L-lysine.. It functions in the pathway protein modification; protein ubiquitination. Functions as a ubiquitin ligase protein in vivo, mediating 'Lys48'-linked polyubiquitination and promoting degradation of TBK1, targeting to TBK1 requires interaction with NLRP4. Regulator of Notch signaling, a signaling pathway involved in cell-cell communications that regulates a broad spectrum of cell-fate determinations. This Mus musculus (Mouse) protein is E3 ubiquitin-protein ligase DTX4 (Dtx4).